The following is a 327-amino-acid chain: Phenylalanine--tRNA ligase alpha subunit (327 aa).

Mg(2+) is bound at residue Glu252.

It belongs to the class-II aminoacyl-tRNA synthetase family. Phe-tRNA synthetase alpha subunit type 1 subfamily. Tetramer of two alpha and two beta subunits. Requires Mg(2+) as cofactor.

The protein resides in the cytoplasm. It catalyses the reaction tRNA(Phe) + L-phenylalanine + ATP = L-phenylalanyl-tRNA(Phe) + AMP + diphosphate + H(+). The protein is Phenylalanine--tRNA ligase alpha subunit of Vibrio parahaemolyticus serotype O3:K6 (strain RIMD 2210633).